The following is a 317-amino-acid chain: Putative 12-oxophytodienoate reductase 10 (317 aa).

26–28 serves as a coordination point for FMN; that stretch reads PVG. 117–120 provides a ligand contact to substrate; that stretch reads HGAN. Catalysis depends on Y122, which acts as the Proton donor. FMN is bound at residue R169. R209 is a substrate binding site. FMN is bound by residues G244 and 265-266; that span reads GR.

The protein belongs to the NADH:flavin oxidoreductase/NADH oxidase family. Requires FMN as cofactor.

Functionally, putative oxophytodienoate reductase that may be involved in the biosynthesis or metabolism of oxylipin signaling molecules. The sequence is that of Putative 12-oxophytodienoate reductase 10 (OPR10) from Oryza sativa subsp. japonica (Rice).